We begin with the raw amino-acid sequence, 268 residues long: Small ribosomal subunit protein mS43 (268 aa).

The N-terminal 23 residues, Met-1–Ser-23, are a transit peptide targeting the mitochondrion.

This sequence belongs to the mitochondrion-specific ribosomal protein mS43 family. In terms of assembly, component of the mitochondrial small ribosomal subunit (mt-SSU). Mature yeast 74S mitochondrial ribosomes consist of a small (37S) and a large (54S) subunit. The 37S small subunit contains a 15S ribosomal RNA (15S mt-rRNA) and at least 32 different proteins. The 54S large subunit contains a 21S rRNA (21S mt-rRNA) and at least 45 different proteins. mS43 forms a dimer with mS42, building a large protuberance adjacent to the mRNA channel exit in the mt-SSU body.

Its subcellular location is the mitochondrion. Its function is as follows. Component of the mitochondrial ribosome (mitoribosome), a dedicated translation machinery responsible for the synthesis of mitochondrial genome-encoded proteins, including at least some of the essential transmembrane subunits of the mitochondrial respiratory chain. The mitoribosomes are attached to the mitochondrial inner membrane and translation products are cotranslationally integrated into the membrane. This Schizosaccharomyces pombe (strain 972 / ATCC 24843) (Fission yeast) protein is Small ribosomal subunit protein mS43.